Consider the following 487-residue polypeptide: ATP-dependent RNA helicase DBP3 (487 aa).

The disordered stretch occupies residues M1–D40. Positions T71–S98 match the Q motif motif. The region spanning W101–V276 is the Helicase ATP-binding domain. A114–T121 is an ATP binding site. The DEAD box signature appears at D222–D225. One can recognise a Helicase C-terminal domain in the interval R291–G456.

This sequence belongs to the DEAD box helicase family. DDX5/DBP2 subfamily.

The protein resides in the nucleus. It localises to the nucleolus. The enzyme catalyses ATP + H2O = ADP + phosphate + H(+). Functionally, ATP-dependent RNA helicase required for 60S ribosomal subunit synthesis. Involved in efficient pre-rRNA processing, predominantly at site A3, which is necessary for the normal formation of 25S and 5.8S rRNAs. This Ajellomyces capsulatus (strain NAm1 / WU24) (Darling's disease fungus) protein is ATP-dependent RNA helicase DBP3 (DBP3).